An 81-amino-acid chain; its full sequence is Cytochrome b559 subunit alpha (81 aa).

A helical membrane pass occupies residues 21–35 (VIHSVTIPSLFVGGW). Position 23 (His23) interacts with heme.

The protein belongs to the PsbE/PsbF family. Heterodimer of an alpha subunit and a beta subunit. PSII is composed of 1 copy each of membrane proteins PsbA, PsbB, PsbC, PsbD, PsbE, PsbF, PsbH, PsbI, PsbJ, PsbK, PsbL, PsbM, PsbT, PsbY, PsbZ, Psb30/Ycf12, at least 3 peripheral proteins of the oxygen-evolving complex and a large number of cofactors. It forms dimeric complexes. Heme b serves as cofactor.

Its subcellular location is the plastid. The protein localises to the chloroplast thylakoid membrane. Functionally, this b-type cytochrome is tightly associated with the reaction center of photosystem II (PSII). PSII is a light-driven water:plastoquinone oxidoreductase that uses light energy to abstract electrons from H(2)O, generating O(2) and a proton gradient subsequently used for ATP formation. It consists of a core antenna complex that captures photons, and an electron transfer chain that converts photonic excitation into a charge separation. This Euglena gracilis protein is Cytochrome b559 subunit alpha.